Consider the following 128-residue polypeptide: Elongation factor G (128 aa).

It belongs to the GTP-binding elongation factor family. EF-G/EF-2 subfamily.

The protein localises to the cytoplasm. Catalyzes the GTP-dependent ribosomal translocation step during translation elongation. During this step, the ribosome changes from the pre-translocational (PRE) to the post-translocational (POST) state as the newly formed A-site-bound peptidyl-tRNA and P-site-bound deacylated tRNA move to the P and E sites, respectively. Catalyzes the coordinated movement of the two tRNA molecules, the mRNA and conformational changes in the ribosome. In Planobispora rosea, this protein is Elongation factor G (fusA).